We begin with the raw amino-acid sequence, 431 residues long: Serine--tRNA ligase (431 aa).

Position 236–238 (236–238) interacts with L-serine; sequence TAE. 267–269 provides a ligand contact to ATP; that stretch reads RSE. Glutamate 290 lines the L-serine pocket. Position 354 to 357 (354 to 357) interacts with ATP; that stretch reads EISS. An L-serine-binding site is contributed by serine 389.

The protein belongs to the class-II aminoacyl-tRNA synthetase family. Type-1 seryl-tRNA synthetase subfamily. As to quaternary structure, homodimer. The tRNA molecule binds across the dimer.

It localises to the cytoplasm. The enzyme catalyses tRNA(Ser) + L-serine + ATP = L-seryl-tRNA(Ser) + AMP + diphosphate + H(+). It catalyses the reaction tRNA(Sec) + L-serine + ATP = L-seryl-tRNA(Sec) + AMP + diphosphate + H(+). Its pathway is aminoacyl-tRNA biosynthesis; selenocysteinyl-tRNA(Sec) biosynthesis; L-seryl-tRNA(Sec) from L-serine and tRNA(Sec): step 1/1. Functionally, catalyzes the attachment of serine to tRNA(Ser). Is also able to aminoacylate tRNA(Sec) with serine, to form the misacylated tRNA L-seryl-tRNA(Sec), which will be further converted into selenocysteinyl-tRNA(Sec). This chain is Serine--tRNA ligase, found in Herminiimonas arsenicoxydans.